The chain runs to 479 residues: Nuclear receptor subfamily 6 group A member 1 (479 aa).

A disordered region spans residues 1-32 (MERDERPPSGGGGGGGSAGFLEPPAALPPPPR). Residues 9–18 (SGGGGGGGSA) are compositionally biased toward gly residues. Positions 57-132 (QRTCLICGDR…MGMNRKAIRE (76 aa)) form a DNA-binding region, nuclear receptor. C60, C63, C77, C80, C96, C102, C112, and C115 together coordinate Zn(2+). NR C4-type zinc fingers lie at residues 60–80 (CLIC…CEGC) and 96–120 (CSRD…LLKC). Disordered regions lie at residues 131-150 (REDG…QISE) and 162-198 (FEEE…TLSS). The segment covering 165-177 (EANHWSNHGDSDH) has biased composition (basic and acidic residues). The sufficient for interaction with UIMC1 stretch occupies residues 172 to 252 (HGDSDHSSPG…RSLDPQSYSL (81 aa)). Positions 178–198 (SSPGNRASESNQPSPGSTLSS) are enriched in polar residues. In terms of domain architecture, NR LBD spans 248-479 (QSYSLIHQLV…HSCKTSVGKE (232 aa)).

It belongs to the nuclear hormone receptor family. NR6 subfamily. As to quaternary structure, homodimer. Interacts with UIMC1.

The protein resides in the nucleus. In terms of biological role, orphan nuclear receptor that binds to a response element containing the sequence 5'-TCAAGGTCA-3'. Acts as a regulator of embryonic stem cell pluripotency by mediating repression of POU5F1/OCT4: binds to the DR0 element within the POU5F1/OCT4 promoter and inhibits POU5F1/OCT4 expression during embryonic stem cell differentiation. Involved in the regulation of gene expression in germ cell development during gametogenesis. The sequence is that of Nuclear receptor subfamily 6 group A member 1 (NR6A1) from Sus scrofa (Pig).